Here is a 188-residue protein sequence, read N- to C-terminus: Elongation factor P (188 aa).

The residue at position 34 (Lys34) is an N6-(3,6-diaminohexanoyl)-5-hydroxylysine.

The protein belongs to the elongation factor P family. Post-translationally, may be beta-lysylated on the epsilon-amino group of Lys-34 by the combined action of EpmA and EpmB, and then hydroxylated on the C5 position of the same residue by EpmC (if this protein is present). Lysylation is critical for the stimulatory effect of EF-P on peptide-bond formation. The lysylation moiety may extend toward the peptidyltransferase center and stabilize the terminal 3-CCA end of the tRNA. Hydroxylation of the C5 position on Lys-34 may allow additional potential stabilizing hydrogen-bond interactions with the P-tRNA.

Its subcellular location is the cytoplasm. It participates in protein biosynthesis; polypeptide chain elongation. Involved in peptide bond synthesis. Alleviates ribosome stalling that occurs when 3 or more consecutive Pro residues or the sequence PPG is present in a protein, possibly by augmenting the peptidyl transferase activity of the ribosome. Modification of Lys-34 is required for alleviation. The sequence is that of Elongation factor P from Vibrio campbellii (strain ATCC BAA-1116).